A 634-amino-acid chain; its full sequence is Threonine--tRNA ligase (634 aa).

The TGS domain maps to 1–61; that stretch reads MFEVKLKDGS…DSDCEVQFVK (61 aa). The tract at residues 242-532 is catalytic; it reads DHRKIGKEMG…LIEHYAGKFP (291 aa). The Zn(2+) site is built by C333, H384, and H509.

Belongs to the class-II aminoacyl-tRNA synthetase family. In terms of assembly, homodimer. The cofactor is Zn(2+).

The protein resides in the cytoplasm. The catalysed reaction is tRNA(Thr) + L-threonine + ATP = L-threonyl-tRNA(Thr) + AMP + diphosphate + H(+). In terms of biological role, catalyzes the attachment of threonine to tRNA(Thr) in a two-step reaction: L-threonine is first activated by ATP to form Thr-AMP and then transferred to the acceptor end of tRNA(Thr). Also edits incorrectly charged L-seryl-tRNA(Thr). In Finegoldia magna (strain ATCC 29328 / DSM 20472 / WAL 2508) (Peptostreptococcus magnus), this protein is Threonine--tRNA ligase.